Consider the following 478-residue polypeptide: Catalase easC (478 aa).

Histidine 54 is a catalytic residue. Position 343 (tyrosine 343) interacts with heme. The interval 459–478 (VAEKARPDSPSRAQPGQLRL) is disordered.

This sequence belongs to the catalase family. Requires heme as cofactor.

It participates in alkaloid biosynthesis; ergot alkaloid biosynthesis. In terms of biological role, catalase; part of the gene cluster that mediates the biosynthesis of fungal ergot alkaloid. DmaW catalyzes the first step of ergot alkaloid biosynthesis by condensing dimethylallyl diphosphate (DMAP) and tryptophan to form 4-dimethylallyl-L-tryptophan. The second step is catalyzed by the methyltransferase easF that methylates 4-dimethylallyl-L-tryptophan in the presence of S-adenosyl-L-methionine, resulting in the formation of 4-dimethylallyl-L-abrine. The catalase easC and the FAD-dependent oxidoreductase easE then transform 4-dimethylallyl-L-abrine to chanoclavine-I which is further oxidized by easD in the presence of NAD(+), resulting in the formation of chanoclavine-I aldehyde. Chanoclavine-I aldehyde is the precursor of ergoamides and ergopeptines in Clavicipitaceae, and clavine-type alcaloids such as fumiclavine in Trichocomaceae. However, the metabolites downstream of chanoclavine-I aldehyde in Arthrodermataceae have not been identified yet. The sequence is that of Catalase easC from Arthroderma benhamiae (strain ATCC MYA-4681 / CBS 112371) (Trichophyton mentagrophytes).